The primary structure comprises 232 residues: Ribonuclease 3 (232 aa).

The region spanning 5-134 (NDAISKIIDY…LIGAIYIDGG (130 aa)) is the RNase III domain. Glu47 is a Mg(2+) binding site. The active site involves Asp51. The Mg(2+) site is built by Asn120 and Glu123. The active site involves Glu123. The region spanning 159–228 (DPKTSLQEWT…AELMLEKIGK (70 aa)) is the DRBM domain.

This sequence belongs to the ribonuclease III family. As to quaternary structure, homodimer. It depends on Mg(2+) as a cofactor.

It localises to the cytoplasm. It carries out the reaction Endonucleolytic cleavage to 5'-phosphomonoester.. In terms of biological role, digests double-stranded RNA. Involved in the processing of primary rRNA transcript to yield the immediate precursors to the large and small rRNAs (23S and 16S). Processes some mRNAs, and tRNAs when they are encoded in the rRNA operon. Processes pre-crRNA and tracrRNA of type II CRISPR loci if present in the organism. The protein is Ribonuclease 3 of Wolbachia pipientis wMel.